We begin with the raw amino-acid sequence, 437 residues long: MTSFRKRTVQKPIRGTRTSPHTAQVITSSGNPYLDVVIGGGLPMGSICLIEEDRFMTHAKVLAKYFLAEGVISKQEIFLGSLDDIPAEMLRRLPRPLTDQESMEQSEVQALGDAGAENGLRIAWRYNDLPLVNSEHATAKIGHHFNLMEQMDSMMLYNVKTTLWDDSPKHLDIVIDEEFSKSSSPTTPSLEQQPVEDAPPIPGTETAPQEKMPAQEEENSANNNNNNNNNSSSVTSSTKTGSQDSPLQVFHNPRYKGLLNDIQQLLRNESFVAGTKNNLCRVCLTSLGSPLWYDEHFGEDLIKFLTLLMASVRNCNSVCLITMPMHLIAKYDASLVPKIRQLVDYAIELESFAGSERETHPAFKEYSGLLHLHKMSAINTLAVHMPETPDLAFKLRRKKFIIEKFHLPPELQESSAKPDNCISGLLSNSNATASLDF.

The interval 179–247 is disordered; that stretch reads FSKSSSPTTP…TKTGSQDSPL (69 aa). Residues 181–192 are compositionally biased toward polar residues; that stretch reads KSSSPTTPSLEQ. Serine 183 carries the phosphoserine modification. Residues 220-237 show a composition bias toward low complexity; the sequence is SANNNNNNNNNSSSVTSS. Serine 242 is modified (phosphoserine).

It belongs to the ELP4 family. In terms of assembly, component of the elongator complex composed of Elp1, Elp2, Elp3, Elp4, Elp5 and Elp6. The elongator complex associates with and stabilizes microtubules; efficient interaction requires the full complex.

The protein resides in the cytoplasm. Its subcellular location is the nucleus. The protein localises to the cytoskeleton. It localises to the spindle. The protein operates within tRNA modification; 5-methoxycarbonylmethyl-2-thiouridine-tRNA biosynthesis. Component of the elongator complex, which is required for multiple tRNA modifications, including mcm5U (5-methoxycarbonylmethyl uridine), mcm5s2U (5-methoxycarbonylmethyl-2-thiouridine), and ncm5U (5-carbamoylmethyl uridine). The elongator complex catalyzes the formation of carboxymethyluridine in the wobble base at position 34 in tRNAs. Binding by the elongator complex stabilizes microtubules and promotes their growth. This induces central spindle asymmetry, promoting polarized signaling endosome trafficking during asymmetric cell division and cell fate assignation of sensory organ precursor cells. This chain is Elongator complex protein 4, found in Drosophila melanogaster (Fruit fly).